A 775-amino-acid chain; its full sequence is Protein U58 (775 aa).

It belongs to the herpesviridae UL87 family.

In Homo sapiens (Human), this protein is Protein U58 (U58).